The chain runs to 459 residues: tRNA modification GTPase MnmE (459 aa).

Residues R22, E85, and R124 each contribute to the (6S)-5-formyl-5,6,7,8-tetrahydrofolate site. Residues 221 to 380 (GLSTVIVGKP…LEIQIRDLFF (160 aa)) enclose the TrmE-type G domain. N231 contacts K(+). GTP contacts are provided by residues 231–236 (NVGKSS), 250–256 (TEVAGTT), and 275–278 (DTAG). S235 provides a ligand contact to Mg(2+). The K(+) site is built by T250, V252, and T255. T256 provides a ligand contact to Mg(2+). K459 serves as a coordination point for (6S)-5-formyl-5,6,7,8-tetrahydrofolate.

This sequence belongs to the TRAFAC class TrmE-Era-EngA-EngB-Septin-like GTPase superfamily. TrmE GTPase family. Homodimer. Heterotetramer of two MnmE and two MnmG subunits. The cofactor is K(+).

It localises to the cytoplasm. Exhibits a very high intrinsic GTPase hydrolysis rate. Involved in the addition of a carboxymethylaminomethyl (cmnm) group at the wobble position (U34) of certain tRNAs, forming tRNA-cmnm(5)s(2)U34. The polypeptide is tRNA modification GTPase MnmE (Staphylococcus aureus (strain bovine RF122 / ET3-1)).